Reading from the N-terminus, the 377-residue chain is 3-dehydroquinate synthase (377 aa).

Residues 113–117 (GVIGD), 137–138 (TT), Lys150, Lys159, and 177–180 (FLDT) each bind NAD(+). Zn(2+) is bound by residues Glu192, His254, and His273.

This sequence belongs to the sugar phosphate cyclases superfamily. Dehydroquinate synthase family. Co(2+) is required as a cofactor. The cofactor is Zn(2+). NAD(+) serves as cofactor.

The protein localises to the cytoplasm. The enzyme catalyses 7-phospho-2-dehydro-3-deoxy-D-arabino-heptonate = 3-dehydroquinate + phosphate. Its pathway is metabolic intermediate biosynthesis; chorismate biosynthesis; chorismate from D-erythrose 4-phosphate and phosphoenolpyruvate: step 2/7. Catalyzes the conversion of 3-deoxy-D-arabino-heptulosonate 7-phosphate (DAHP) to dehydroquinate (DHQ). In Bartonella quintana (strain Toulouse) (Rochalimaea quintana), this protein is 3-dehydroquinate synthase.